The chain runs to 746 residues: 4-hydroxy-3-methylbut-2-en-1-yl diphosphate synthase (flavodoxin) (746 aa).

Positions 653, 656, 687, and 694 each coordinate [4Fe-4S] cluster.

It belongs to the IspG family. It depends on [4Fe-4S] cluster as a cofactor.

The catalysed reaction is (2E)-4-hydroxy-3-methylbut-2-enyl diphosphate + oxidized [flavodoxin] + H2O + 2 H(+) = 2-C-methyl-D-erythritol 2,4-cyclic diphosphate + reduced [flavodoxin]. The protein operates within isoprenoid biosynthesis; isopentenyl diphosphate biosynthesis via DXP pathway; isopentenyl diphosphate from 1-deoxy-D-xylulose 5-phosphate: step 5/6. Its function is as follows. Converts 2C-methyl-D-erythritol 2,4-cyclodiphosphate (ME-2,4cPP) into 1-hydroxy-2-methyl-2-(E)-butenyl 4-diphosphate. This Chlorobaculum tepidum (strain ATCC 49652 / DSM 12025 / NBRC 103806 / TLS) (Chlorobium tepidum) protein is 4-hydroxy-3-methylbut-2-en-1-yl diphosphate synthase (flavodoxin).